A 207-amino-acid chain; its full sequence is MTTKGILGKKVGMTQVFTENGELVPVTVVKVDSNVVLQVKTMENDGYEAIQLGFDDLREVLTNKPAKGHAAKANTTPKRFVREIRDVELGEYKVGDEVKADIFEAGDFVDVTGTSKGHGFQGSIKRNGQHRGPMAHGSRYHRRPGSMGVIINRVMKGKLLPGRMGGNRVTIQNLEIVKADTENGVLLIKGNVPGANKSLVTIKSTVK.

Residues 119–143 are disordered; sequence GFQGSIKRNGQHRGPMAHGSRYHRR.

It belongs to the universal ribosomal protein uL3 family. Part of the 50S ribosomal subunit. Forms a cluster with proteins L14 and L19.

In terms of biological role, one of the primary rRNA binding proteins, it binds directly near the 3'-end of the 23S rRNA, where it nucleates assembly of the 50S subunit. This Ligilactobacillus salivarius (strain UCC118) (Lactobacillus salivarius) protein is Large ribosomal subunit protein uL3.